The sequence spans 236 residues: UPF0257 lipoprotein YnfC (236 aa).

An N-terminal signal peptide occupies residues 1–16; the sequence is MKKPLLLTLLCMILAG. Cys-17 is lipidated: N-palmitoyl cysteine. Cys-17 carries the S-diacylglycerol cysteine lipid modification.

It belongs to the UPF0257 family.

It is found in the cell membrane. The polypeptide is UPF0257 lipoprotein YnfC (Salmonella paratyphi C (strain RKS4594)).